The primary structure comprises 312 residues: D-apiose import binding protein (312 aa).

The signal sequence occupies residues 1 to 26 (MKASKRWVALAAATLTLFTATGTAQA). Residues asparagine 39, 115–116 (DR), 162–164 (DIN), arginine 168, asparagine 218, aspartate 243, and glutamine 263 contribute to the D-apiofuranose site.

The protein belongs to the bacterial solute-binding protein 2 family.

Its subcellular location is the periplasm. Functionally, part of an ABC transporter complex involved in D-apiose import. Binds D-apiose, D-ribose and D-ribulose. This is D-apiose import binding protein from Paraburkholderia graminis (strain ATCC 700544 / DSM 17151 / LMG 18924 / NCIMB 13744 / C4D1M).